The sequence spans 1117 residues: Telomerase reverse transcriptase (1117 aa).

The segment at Met-1 to Asn-191 is TEN. The tract at residues Asn-217 to Leu-519 is RBD. Residues Glu-517–Ile-881 form the Reverse transcriptase domain. Residues Ile-520–Glu-887 are RT. Asp-618 lines the Mg(2+) pocket. The TRAP stretch occupies residues Ser-638–Lys-742. 2 residues coordinate Mg(2+): Asp-815 and Asp-816. The tract at residues Ile-888–Asn-1117 is CTE.

The protein belongs to the reverse transcriptase family. Telomerase subfamily. Component of the telomerase holoenzyme complex, composed of the catalytic core (the catalytic subunit TERT, the telomerase RNA template component TER and TAP65/p65), which is associated with two heterotrimeric subcomplexes: (i) the replication protein A (RPA)-related subcomplex, composed of TEB1, RPA2/TEB2 and RPA3/TEB3 and (ii) the CST-like subcomplex, composed of TAP75/p75, TAP45/p45 and TAP19/p19. TEB1 and the CST-like subcomplex are tethered to the catalytic core by TAP50/p50.

Its subcellular location is the nucleus. It localises to the chromosome. The protein resides in the telomere. The catalysed reaction is DNA(n) + a 2'-deoxyribonucleoside 5'-triphosphate = DNA(n+1) + diphosphate. In terms of biological role, catalytic component of telomerase, an essential ribonucleoprotein enzyme that copies new telomeric repeats onto chromosome ends by repetitively synthesizing the short telomere-repeat sequence 5'-TTGGGG-3' using an RNA template component TER. TERT is a reverse transcriptase that adds simple sequence repeats to chromosome ends by copying a template sequence within the RNA component of the enzyme. The chain is Telomerase reverse transcriptase from Tetrahymena thermophila (strain SB210).